A 103-amino-acid polypeptide reads, in one-letter code: Large ribosomal subunit protein bL21 (103 aa).

The protein belongs to the bacterial ribosomal protein bL21 family. As to quaternary structure, part of the 50S ribosomal subunit. Contacts protein L20.

In terms of biological role, this protein binds to 23S rRNA in the presence of protein L20. The polypeptide is Large ribosomal subunit protein bL21 (Clostridioides difficile (strain 630) (Peptoclostridium difficile)).